The following is a 468-amino-acid chain: Peroxisome proliferator-activated receptor alpha (468 aa).

The segment at 1 to 20 (MVDTESQICPLSPFGDDDLE) is disordered. A DNA-binding region (nuclear receptor) is located at residues 99–173 (NIECRICGDK…DGMSHNAIRF (75 aa)). NR C4-type zinc fingers lie at residues 102 to 122 (CRIC…CEGC) and 139 to 161 (CDRS…FQKC). The 228-residue stretch at 239–466 (FVIHDMETLC…HPLLQEIYRD (228 aa)) folds into the NR LBD domain. Residues 304-433 (DQVTLLKYGV…PKLLQKMADL (130 aa)) form a required for heterodimerization with RXRA region.

It belongs to the nuclear hormone receptor family. NR1 subfamily. Heterodimer; with RXRA. This heterodimerization is required for DNA binding and transactivation activity. Interacts with NCOA3 coactivator. Interacts with CITED2; the interaction stimulates its transcriptional activity. Also interacts with PPARBP in vitro. Interacts with AKAP13, LPIN1, PRDM16 and coactivator NCOA6. Interacts with ASXL1 and ASXL2. Interacts with PER2. Interacts with SIRT1; the interaction seems to be modulated by NAD(+) levels. Interacts with CRY1 and CRY2. In hepatocytes, interacts with PAQR3 and HUWE1; the interactions promote PPARA poylubiquitination and HUWE1-mediated degradation. Ubiquitinated by E3 ubiquitin-protein ligase HUWE1; leading to proteasomal degradation. In terms of processing, phosphorylated.

The protein localises to the nucleus. Its function is as follows. Ligand-activated transcription factor. Key regulator of lipid metabolism. Activated by the endogenous ligand 1-palmitoyl-2-oleoyl-sn-glycerol-3-phosphocholine (16:0/18:1-GPC). Activated by oleylethanolamide, a naturally occurring lipid that regulates satiety. Receptor for peroxisome proliferators such as hypolipidemic drugs and fatty acids. Regulates the peroxisomal beta-oxidation pathway of fatty acids. Functions as a transcription activator for the ACOX1 and P450 genes. Transactivation activity requires heterodimerization with RXRA and is antagonized by NR2C2. May be required for the propagation of clock information to metabolic pathways regulated by PER2. In Phascolarctos cinereus (Koala), this protein is Peroxisome proliferator-activated receptor alpha (PPARA).